The primary structure comprises 246 residues: uncharacterized protein (246 aa).

Disordered regions lie at residues 29–54 (SLET…ENGS), 93–114 (LRRT…EDKF), and 148–246 (PIPP…SVVI). Positions 35-49 (PTSSSPSLSSNSDVS) are enriched in low complexity. The span at 172 to 183 (RQQTNNIRTLHV) shows a compositional bias: polar residues. 2 stretches are compositionally biased toward low complexity: residues 190–203 (SSSS…PSSS) and 214–225 (SKTTKNRSSNSS). Asparagine 219 carries an N-linked (GlcNAc...) asparagine glycan. Residues 235 to 246 (LTPSPTFESVVI) are compositionally biased toward polar residues.

This is an uncharacterized protein from Caenorhabditis elegans.